The following is a 482-amino-acid chain: ATP synthase subunit beta (482 aa).

Residue 167 to 174 (GGAGVGKT) participates in ATP binding.

It belongs to the ATPase alpha/beta chains family. In terms of assembly, F-type ATPases have 2 components, CF(1) - the catalytic core - and CF(0) - the membrane proton channel. CF(1) has five subunits: alpha(3), beta(3), gamma(1), delta(1), epsilon(1). CF(0) has three main subunits: a(1), b(2) and c(9-12). The alpha and beta chains form an alternating ring which encloses part of the gamma chain. CF(1) is attached to CF(0) by a central stalk formed by the gamma and epsilon chains, while a peripheral stalk is formed by the delta and b chains.

The protein resides in the cell membrane. The enzyme catalyses ATP + H2O + 4 H(+)(in) = ADP + phosphate + 5 H(+)(out). Functionally, produces ATP from ADP in the presence of a proton gradient across the membrane. The catalytic sites are hosted primarily by the beta subunits. This chain is ATP synthase subunit beta, found in Corynebacterium aurimucosum (strain ATCC 700975 / DSM 44827 / CIP 107346 / CN-1) (Corynebacterium nigricans).